Reading from the N-terminus, the 472-residue chain is FAD-dependent monooxygenase ltmM (472 aa).

A helical membrane pass occupies residues 7-27 (VIIVGGSVAGLSLAHCLEKIG). E34, G48, and R107 together coordinate FAD. N-linked (GlcNAc...) asparagine glycosylation is present at N186. The FAD site is built by D306 and A319. A helical transmembrane segment spans residues 450–470 (IVYALYLVAAAAFILYCLSSL).

Belongs to the paxM FAD-dependent monooxygenase family. Requires FAD as cofactor.

It localises to the membrane. It functions in the pathway secondary metabolite biosynthesis. FAD-dependent monooxygenase; part of the gene cluster that mediates the biosynthesis of lolitrems, indole-diterpene mycotoxins that are potent tremorgens in mammals, and are synthesized by clavicipitaceous fungal endophytes in association with their grass hosts. The geranylgeranyl diphosphate (GGPP) synthase ltmG is proposed to catalyze the first step in lolitrem biosynthesis. LtmG catalyzes a series of iterative condensations of isopentenyl diphosphate (IPP) with dimethylallyl diphosphate (DMAPP), geranyl diphosphate (GPP), and farnesyl diphosphate (FPP), to form GGPP. GGPP then condenses with indole-3-glycerol phosphate to form 3-geranylgeranylindole, an acyclic intermediate, to be incorporated into paxilline. Either ltmG or ltmC could be responsible for this step, as both are putative prenyl transferases. The FAD-dependent monooxygenase ltmM then catalyzes the epoxidation of the two terminal alkenes of the geranylgeranyl moiety, which is subsequently cyclized by ltmC, to paspaline. The cytochrome P450 monooxygenases ltmQ and ltmP can sequentially oxidize paspaline to terpendole E and terpendole F. Alternatively, ltmP converts paspaline to an intermediate which is oxidized by ltmQ to terpendole F. LtmF, ltmK, ltmE and ltmJ appear to be unique to the epichloe endophytes. The prenyltransferase ltmF is involved in the 27-hydroxyl-O-prenylation. The cytochrome P450 monooxygenase ltmK is required for the oxidative acetal ring formation. The multi-functional prenyltransferase ltmE is required for C20- and C21-prenylations of the indole ring of paspalanes and acts together with the cytochrome P450 monooxygenase ltmJ to yield lolitremanes by multiple oxidations and ring closures. The stereoisomer pairs of lolitriol and lolitrem N or lolitrem B and lolitrem F may be attributed to variations in the way in which ring closure can occur under the action of ltmJ. While the major product of this pathway is lolitrem B, the prenyl transferases and cytochrome P450 monooxygenases identified in this pathway have a remarkable versatility in their regio- and stereo-specificities to generate a diverse range of metabolites that are products of a metabolic grid rather than a linear pathway. The chain is FAD-dependent monooxygenase ltmM (ltmM) from Epichloe festucae (strain Fl1).